Consider the following 506-residue polypeptide: Probable Xaa-Pro aminopeptidase BDCG_04966 (506 aa).

4 residues coordinate Mn(2+): Asp-285, Asp-296, Glu-433, and Glu-471.

The protein belongs to the peptidase M24B family. The cofactor is Mn(2+).

The enzyme catalyses Release of any N-terminal amino acid, including proline, that is linked to proline, even from a dipeptide or tripeptide.. In terms of biological role, catalyzes the removal of a penultimate prolyl residue from the N-termini of peptides. The protein is Probable Xaa-Pro aminopeptidase BDCG_04966 of Ajellomyces dermatitidis (strain ER-3 / ATCC MYA-2586) (Blastomyces dermatitidis).